Reading from the N-terminus, the 819-residue chain is Protein O-mannosyl-transferase tmem260 (819 aa).

Over residues 1–10 the composition is skewed to polar residues; the sequence is MNNSPTLSNT. Residues 1 to 68 are disordered; sequence MNNSPTLSNT…NNNNNIINVN (68 aa). The segment covering 15–68 has biased composition (low complexity); it reads NNNNNSNSNSNSNNNNNNNNNNNNNSNNNNNNNNNVNRNVNNRNNNNNNIINVN. Asn-18, Asn-38, and Asn-70 each carry an N-linked (GlcNAc...) asparagine glycan. The next 7 helical transmembrane spans lie at 113–133, 152–172, 185–205, 210–230, 232–252, 285–305, and 316–336; these read IACIVLLFISCTIIYSMTQYP, VAHPPGYPLFTFLGYIFSHII, FMSSMIGSIASIFIYLTVYLW, WCGLLSAYMFTFSPLIWMYQI, GEVFSMNNMFVAMLMFLGVWY, LTNQHTLVLIVIPFAFWLMFI, and ILSNLVFYTLIGLSPYLLLFI. Asn-349 carries N-linked (GlcNAc...) asparagine glycosylation. 4 helical membrane passes run 391-411, 427-447, 459-479, and 505-525; these read LIIQFGYIGLALSLIGLLNLL, MIIFSFLFYITFFFNLCNLPI, FFMQPNVIISITMGLGIKSIF, and YLLPIIIILLVGNQIGFNYNL. N-linked (GlcNAc...) asparagine glycans are attached at residues Asn-531, Asn-686, Asn-693, and Asn-783.

Belongs to the glycosyltransferase 117 (GT117) family.

It is found in the endoplasmic reticulum membrane. The catalysed reaction is a di-trans,poly-cis-dolichyl beta-D-mannosyl phosphate + L-seryl-[protein] = 3-O-(alpha-D-mannosyl)-L-seryl-[protein] + a di-trans,poly-cis-dolichyl phosphate + H(+). The enzyme catalyses a di-trans,poly-cis-dolichyl beta-D-mannosyl phosphate + L-threonyl-[protein] = 3-O-(alpha-D-mannosyl)-L-threonyl-[protein] + a di-trans,poly-cis-dolichyl phosphate + H(+). In terms of biological role, O-mannosyl-transferase that transfers mannosyl residues to the hydroxyl group of serine or threonine residues of proteins. The chain is Protein O-mannosyl-transferase tmem260 from Dictyostelium discoideum (Social amoeba).